The chain runs to 158 residues: D-aminoacyl-tRNA deacylase (158 aa).

The Gly-cisPro motif, important for rejection of L-amino acids motif lies at 144-145; the sequence is GP.

Belongs to the DTD family. Homodimer.

It is found in the cytoplasm. The enzyme catalyses glycyl-tRNA(Ala) + H2O = tRNA(Ala) + glycine + H(+). It catalyses the reaction a D-aminoacyl-tRNA + H2O = a tRNA + a D-alpha-amino acid + H(+). In terms of biological role, an aminoacyl-tRNA editing enzyme that deacylates mischarged D-aminoacyl-tRNAs. Also deacylates mischarged glycyl-tRNA(Ala), protecting cells against glycine mischarging by AlaRS. Acts via tRNA-based rather than protein-based catalysis; rejects L-amino acids rather than detecting D-amino acids in the active site. By recycling D-aminoacyl-tRNA to D-amino acids and free tRNA molecules, this enzyme counteracts the toxicity associated with the formation of D-aminoacyl-tRNA entities in vivo and helps enforce protein L-homochirality. The chain is D-aminoacyl-tRNA deacylase from Corynebacterium kroppenstedtii (strain DSM 44385 / JCM 11950 / CIP 105744 / CCUG 35717).